The following is a 915-amino-acid chain: Nitrate reductase [NADH] (915 aa).

The tract at residues 1–102 is disordered; the sequence is MAASVEPRQP…PRDEGTADAW (102 aa). Low complexity predominate over residues 16–26; that stretch reads APATAPTARAP. Acidic residues predominate over residues 57–71; that stretch reads AEEEEDDDDEDDEGH. Residues 88–97 show a composition bias toward basic and acidic residues; sequence PSTRDPRDEG. C189 is a Mo-molybdopterin binding site. One can recognise a Cytochrome b5 heme-binding domain in the interval 538–613; sequence DKQFTMSEVR…LDTYRIGELI (76 aa). Residues H573 and H596 each coordinate heme. The region spanning 654-767 is the FAD-binding FR-type domain; the sequence is REKVPCRLVD…KGPLGHVEYT (114 aa). FAD is bound by residues 706–709, 723–727, F728, F735, 740–742, S791, and T794; these read RAYT, LVKVY, and LMT.

Belongs to the nitrate reductase family. As to quaternary structure, homodimer. The cofactor is FAD. Heme is required as a cofactor. Requires Mo-molybdopterin as cofactor.

It carries out the reaction nitrite + NAD(+) + H2O = nitrate + NADH + H(+). Nitrate reductase is a key enzyme involved in the first step of nitrate assimilation in plants, fungi and bacteria. In Hordeum vulgare (Barley), this protein is Nitrate reductase [NADH].